A 344-amino-acid chain; its full sequence is C5a anaphylatoxin chemotactic receptor 2 (344 aa).

The Extracellular segment spans residues 1–44; sequence MMNHTTSEYYDYEYDHEHYSDLPDVPVDCPAGTCFTSDVYLIVL. N3 carries N-linked (GlcNAc...) asparagine glycosylation. Residues 45–67 form a helical membrane-spanning segment; it reads LVLYAAVFLVGVPGNTLVAWVTW. Topologically, residues 68–78 are cytoplasmic; sequence KESRHRLGASW. A helical transmembrane segment spans residues 79 to 101; sequence FLHLTMADLLCCVSLPFLAVPIA. Over 102–120 the chain is Extracellular; sequence QKGHWPYGAAGCWLLSSIT. C113 and C192 form a disulfide bridge. Residues 121-143 traverse the membrane as a helical segment; that stretch reads ILSMYASVLLLTGLSGDLFLLAF. Over 144–155 the chain is Cytoplasmic; it reads RPSWKGADHRTF. The helical transmembrane segment at 156–178 threads the bilayer; that stretch reads GVRVVQASSWMLGLLLTVPSAVY. Residues 179-208 lie on the Extracellular side of the membrane; that stretch reads RRLLQEHYPPRLVCGIDYGGSVSAEVAITT. A helical membrane pass occupies residues 209–231; that stretch reads VRFLFGFLGPLVFMAGCHGILQR. The Cytoplasmic segment spans residues 232-243; it reads QMARRHWPLGTA. A helical membrane pass occupies residues 244–266; that stretch reads VVVGFFICWTPYHVLRVIIAAAP. The Extracellular portion of the chain corresponds to 267 to 280; the sequence is PHSLLLARVLEAEP. Residues 281-300 form a helical membrane-spanning segment; sequence LFNGLALAHSALNPIMFLYF. The Cytoplasmic portion of the chain corresponds to 301-344; it reads GRKQLCKSLQAACHWALRDPQDEESAVTKVSISTSHEMVSEMPV. At S325 the chain carries Phosphoserine.

This sequence belongs to the G-protein coupled receptor 1 family. Interacts with C3 (the anaphylatoxin peptide C3a and the adipogenic hormone ASP); the interaction occurs with higher affinity for ASP, enhancing the phosphorylation and activation of GPR77, recruitment of ARRB2 to the cell surface and endocytosis of GRP77. Highly expressed in liver and spleen. Lower levels in intestine, brain and kidney. Also expressed in adipose tissues with highest levels in gonadal and ingual fat depots. Lower levels in brown tissue.

Its subcellular location is the cell membrane. Its function is as follows. Receptor for the chemotactic and inflammatory C3a, C4a and C5a anaphylatoxin peptides and also for their dearginated forms ASP/C3adesArg, C4adesArg and C5adesArg respectively. Couples weakly to G(i)-mediated signaling pathways. This is C5a anaphylatoxin chemotactic receptor 2 (C5ar2) from Mus musculus (Mouse).